A 380-amino-acid polypeptide reads, in one-letter code: Erythronate-4-phosphate dehydrogenase (380 aa).

2 residues coordinate substrate: S45 and T66. D146 provides a ligand contact to NAD(+). The active site involves R207. D232 provides a ligand contact to NAD(+). The active site involves E237. H254 (proton donor) is an active-site residue. An NAD(+)-binding site is contributed by G257. Y258 is a binding site for substrate.

It belongs to the D-isomer specific 2-hydroxyacid dehydrogenase family. PdxB subfamily. Homodimer.

It localises to the cytoplasm. It catalyses the reaction 4-phospho-D-erythronate + NAD(+) = (R)-3-hydroxy-2-oxo-4-phosphooxybutanoate + NADH + H(+). It functions in the pathway cofactor biosynthesis; pyridoxine 5'-phosphate biosynthesis; pyridoxine 5'-phosphate from D-erythrose 4-phosphate: step 2/5. Functionally, catalyzes the oxidation of erythronate-4-phosphate to 3-hydroxy-2-oxo-4-phosphonooxybutanoate. This chain is Erythronate-4-phosphate dehydrogenase, found in Marinomonas sp. (strain MWYL1).